Here is a 349-residue protein sequence, read N- to C-terminus: Neutral protease 2 homolog ACLA_052720 (349 aa).

The signal sequence occupies residues Met-1 to Ala-19. A propeptide spanning residues Ile-20–Arg-172 is cleaved from the precursor. 2 cysteine pairs are disulfide-bonded: Cys-178–Cys-250 and Cys-257–Cys-275. Zn(2+) is bound at residue His-300. Glu-301 is a catalytic residue. His-304 and Asp-315 together coordinate Zn(2+).

Belongs to the peptidase M35 family. The cofactor is Zn(2+).

The protein resides in the secreted. The catalysed reaction is Preferential cleavage of bonds with hydrophobic residues in P1'. Also 3-Asn-|-Gln-4 and 8-Gly-|-Ser-9 bonds in insulin B chain.. Secreted metalloproteinase that allows assimilation of proteinaceous substrates. Shows high activities on basic nuclear substrates such as histone and protamine. The sequence is that of Neutral protease 2 homolog ACLA_052720 from Aspergillus clavatus (strain ATCC 1007 / CBS 513.65 / DSM 816 / NCTC 3887 / NRRL 1 / QM 1276 / 107).